A 1297-amino-acid chain; its full sequence is DNA-directed RNA polymerase subunit beta' (1297 aa).

The Zn(2+) site is built by cysteine 60, cysteine 62, cysteine 75, and cysteine 78. Residues aspartate 535, aspartate 537, and aspartate 539 each coordinate Mg(2+). Residues cysteine 883, cysteine 961, cysteine 968, and cysteine 971 each coordinate Zn(2+).

It belongs to the RNA polymerase beta' chain family. As to quaternary structure, the RNAP catalytic core consists of 2 alpha, 1 beta, 1 beta' and 1 omega subunit. When a sigma factor is associated with the core the holoenzyme is formed, which can initiate transcription. Mg(2+) serves as cofactor. It depends on Zn(2+) as a cofactor.

It catalyses the reaction RNA(n) + a ribonucleoside 5'-triphosphate = RNA(n+1) + diphosphate. Its function is as follows. DNA-dependent RNA polymerase catalyzes the transcription of DNA into RNA using the four ribonucleoside triphosphates as substrates. This chain is DNA-directed RNA polymerase subunit beta', found in Salinispora tropica (strain ATCC BAA-916 / DSM 44818 / JCM 13857 / NBRC 105044 / CNB-440).